Here is a 463-residue protein sequence, read N- to C-terminus: Movement protein TGB1 (463 aa).

The segment at 1 to 126 is disordered; that stretch reads MESGFNGSRP…RIPEEGGGGL (126 aa). Nucleolar localization signal regions lie at residues 11–16 and 37–52; these read HRVKKD and FRKN…KPRS. Polar residues predominate over residues 23–49; the sequence is PVNTQGSSGTTGNAFRKNNNNKTQNWK. The segment covering 58–67 has biased composition (basic and acidic residues); the sequence is NEGDQTKNNK. Over residues 83–95 the composition is skewed to polar residues; the sequence is RPESSTGESVKQQ. Over residues 96–107 the composition is skewed to basic and acidic residues; sequence SEPHRVLEDKKQ. The 142-residue stretch at 185 to 326 folds into the (+)RNA virus helicase ATP-binding domain; it reads CNLSQRESEV…WLQVPVIFQS (142 aa). 215 to 222 provides a ligand contact to ATP; sequence GVPGSGKT. The (+)RNA virus helicase C-terminal domain maps to 327–463; that stretch reads LTSRRFGKAT…QPQTDRYGPE (137 aa).

It belongs to the virgaviridae/benyvirus TGB1 movement protein family. In terms of assembly, homooligomer. TGB1-TGB3-TGB2 complex formation is enhanced by ATP hydrolysis. Interacts with the suppressor of RNA silencing (via N-terminus). Interacts (via N-terminus) with host importin IMPA1. The cofactor is Mg(2+).

The protein resides in the host cell junction. It is found in the host plasmodesma. It localises to the host nucleus. The protein localises to the host cytoplasm. Its subcellular location is the host nucleolus. The protein resides in the host cytoskeleton. It carries out the reaction ATP + H2O = ADP + phosphate + H(+). Participates in the transport of viral genome to neighboring plant cells directly through plasmodesmata, without any budding. Multifunctional movement protein with RNA-binding, ATPase and helicase activities. Engages in homologous interactions leading to the formation of a ribonucleoprotein complex containing plus-sense viral RNAs (vRNPs). ATPase activity is probably required for vRNPs movement complex assembly. Intracellular delivery of TGBp1-containing vRNPs to plasmodesmata is facilitated by TGBp2 and TGBp3. This is Movement protein TGB1 from Potato mop-top virus (isolate Potato/Sweden/Sw) (PMTV).